The chain runs to 405 residues: Deoxyguanosinetriphosphate triphosphohydrolase-like protein (405 aa).

Residues 75-219 (RLTHTIEVAQ…AAIADDIAYN (145 aa)) form the HD domain.

Belongs to the dGTPase family. Type 2 subfamily.

The polypeptide is Deoxyguanosinetriphosphate triphosphohydrolase-like protein (Rhizobium etli (strain CIAT 652)).